A 428-amino-acid chain; its full sequence is Serine hydroxymethyltransferase (428 aa).

120-122 (GHI) contacts (6S)-5,6,7,8-tetrahydrofolate. N6-(pyridoxal phosphate)lysine is present on K226.

The protein belongs to the SHMT family. Homodimer. Pyridoxal 5'-phosphate serves as cofactor.

The protein localises to the cytoplasm. The enzyme catalyses 5,10-methylenetetrahydromethanopterin + glycine + H2O = 5,6,7,8-tetrahydromethanopterin + L-serine. It functions in the pathway amino-acid biosynthesis; glycine biosynthesis; glycine from L-serine: step 1/1. Catalyzes the reversible interconversion of serine and glycine with tetrahydromethanopterin (H4MPT) serving as the one-carbon carrier. Also exhibits a pteridine-independent aldolase activity toward beta-hydroxyamino acids, producing glycine and aldehydes, via a retro-aldol mechanism. This chain is Serine hydroxymethyltransferase, found in Methanopyrus kandleri (strain AV19 / DSM 6324 / JCM 9639 / NBRC 100938).